Consider the following 166-residue polypeptide: T-cell surface glycoprotein CD3 zeta chain (166 aa).

The first 21 residues, 1–21, serve as a signal peptide directing secretion; sequence MKWTALVIVAVLQTQFPVTAA. Over 22–30 the chain is Extracellular; sequence QSFGLLDPK. Residues 31-51 traverse the membrane as a helical segment; the sequence is LCYLLDGILFIYGVIVTALFL. At 52 to 166 the chain is on the cytoplasmic side; the sequence is RAKFSRSADA…ALHMQALPPR (115 aa). The residue at position 58 (serine 58) is a Phosphoserine. ITAM domains are found at residues 61 to 89, 100 to 128, and 133 to 161; these read APAY…LDRR, PQRK…EIGM, and QRRR…LHMQ. Phosphotyrosine occurs at positions 64, 72, 83, 111, 123, 144, and 155. Residues 126 to 156 form a disordered region; it reads IGMKSDNQRRRGKGHDGVYQGLSTATKDTYD.

This sequence belongs to the CD3Z/FCER1G family. In terms of assembly, the TCR-CD3 complex is composed of a CD3D/CD3E and a CD3G/CD3E heterodimers that preferentially associate with TCRalpha and TCRbeta, respectively, to form TCRalpha/CD3E/CD3G and TCRbeta/CD3G/CD3E trimers. In turn, the hexamer interacts with CD3Z homodimer to form the TCR-CD3 complex. Alternatively, TCRalpha and TCRbeta can be replaced by TCRgamma and TCRdelta. Interacts with SLA. Interacts with TRAT1. Interacts with DOCK2. Interacts with SLA2. Interacts with SHB. Interacts with ZAP70. Interacts (tyrosine phosphorylated) with SHC1 (via SH2 domain). Interacts with PTPRC. Interacts with CRK; this interaction regulates CD3Z phosphorylation. Interacts (on T cell side) with CD81, ICAM1 and CD9 at immunological synapses between antigen-presenting cells and T cells. Interacts with CD160. Interacts with LY6E. Interacts with LY6E. The signaling subunit of immunoglobulin gamma (IgG) Fc receptor complex. As a homodimer or a heterodimer with FCER1G, associates with the ligand binding subunit FCGR3A (via transmembrane domain); this interaction is a prerequisite for Fc receptor complex expression on the cell surface. Interacts with CD5. Post-translationally, phosphorylated on Tyr residues after T-cell receptor triggering by LCK in association with CD4/CD8.

Its subcellular location is the cell membrane. Functionally, part of the TCR-CD3 complex present on T-lymphocyte cell surface that plays an essential role in adaptive immune response. When antigen presenting cells (APCs) activate T-cell receptor (TCR), TCR-mediated signals are transmitted across the cell membrane by the CD3 chains CD3D, CD3E, CD3G and CD3Z. All CD3 chains contain immunoreceptor tyrosine-based activation motifs (ITAMs) in their cytoplasmic domain. Upon TCR engagement, these motifs become phosphorylated by Src family protein tyrosine kinases LCK and FYN, resulting in the activation of downstream signaling pathways. CD3Z ITAMs phosphorylation creates multiple docking sites for the protein kinase ZAP70 leading to ZAP70 phosphorylation and its conversion into a catalytically active enzyme. Plays an important role in intrathymic T-cell differentiation. Additionally, participates in the activity-dependent synapse formation of retinal ganglion cells (RGCs) in both the retina and dorsal lateral geniculate nucleus (dLGN). The sequence is that of T-cell surface glycoprotein CD3 zeta chain (CD247) from Ovis aries (Sheep).